An 84-amino-acid polypeptide reads, in one-letter code: Large ribosomal subunit protein bL27 (84 aa).

The disordered stretch occupies residues Met1 to Tyr20.

This sequence belongs to the bacterial ribosomal protein bL27 family.

The sequence is that of Large ribosomal subunit protein bL27 from Francisella tularensis subsp. tularensis (strain FSC 198).